The following is a 266-amino-acid chain: NADP-dependent mannitol dehydrogenase (266 aa).

3 residues coordinate NADP(+): serine 53, asparagine 107, and lysine 140. Serine 159 functions as the Proton donor in the catalytic mechanism. NADP(+) is bound by residues tyrosine 174, lysine 178, isoleucine 206, and threonine 208. The active-site Proton acceptor is tyrosine 174. The active-site Lowers pKa of active site Tyr is lysine 178.

This sequence belongs to the short-chain dehydrogenases/reductases (SDR) family. Homotetramer.

It carries out the reaction D-mannitol + NADP(+) = D-fructose + NADPH + H(+). Its function is as follows. D-mannitol 2-dehydrogenase which is not necessary for D-mannitol catabolism. D-mannitol metabolism occurs via at least two different routes involving mannitol dehydrogenase (MDH) or mannitol 1-phosphate dehydrogenase, and the exact physiological role of mannitol dehydrogenases remains unclear. This is NADP-dependent mannitol dehydrogenase from Hypocrea jecorina (strain ATCC 56765 / BCRC 32924 / NRRL 11460 / Rut C-30) (Trichoderma reesei).